The sequence spans 291 residues: tRNA pseudouridine synthase-like 1 (291 aa).

Aspartate 66 serves as the catalytic Nucleophile. Substrate is bound at residue tyrosine 130.

It belongs to the tRNA pseudouridine synthase TruA family.

The catalysed reaction is a uridine in tRNA = a pseudouridine in tRNA. The chain is tRNA pseudouridine synthase-like 1 (Pusl1) from Mus musculus (Mouse).